A 469-amino-acid polypeptide reads, in one-letter code: Protein C-ets-2 (469 aa).

The 86-residue stretch at 85-170 (ATFSGFKKEQ…EHLEQMIKEN (86 aa)) folds into the PNT domain. 2 positions are modified to phosphoserine: S220 and S225. Residues 264 to 289 (NLLTNNSGTPKDHDSPENGADSFESS) form a disordered region. S295, S298, and S301 each carry phosphoserine. Positions 363–443 (IQLWQFLLEL…SGKRYVYRFV (81 aa)) form a DNA-binding region, ETS.

The protein belongs to the ETS family. Post-translationally, phosphorylation by CDK10 at Ser-220 and Ser-225 creates a phosphodegron that targets ETS2 for proteasomal degradation.

Its subcellular location is the nucleus. In terms of biological role, transcription factor activating transcription. Binds specifically the DNA GGAA/T core motif (Ets-binding site or EBS) in gene promoters and stimulates transcription. This chain is Protein C-ets-2 (ETS2), found in Homo sapiens (Human).